A 182-amino-acid polypeptide reads, in one-letter code: Transcription repressor OFP11 (182 aa).

The tract at residues 62-94 (PLHRRHSSENPAGVFSTNRREEEEEDETTTSVS) is disordered. In terms of domain architecture, OVATE spans 104 to 169 (MKHIESPDPY…VSAFADTLLW (66 aa)).

As to expression, expressed in roots, rosette and cauline leaves, shoots, stems, flower buds and siliques.

It is found in the nucleus. Transcriptional repressor that may regulate multiple aspects of plant growth and development through the regulation of BEL1-LIKE (BLH) and KNOX TALE (KNAT) homeodomain transcription factors. The chain is Transcription repressor OFP11 (OFP11) from Arabidopsis thaliana (Mouse-ear cress).